The chain runs to 196 residues: MPELIVPVGLVCGIDEAGRGPLAGPVVAAAVILDPERPIVGLNDSKKLSEKKRDALAEIIRERALAWAVAEATVEEIDRLNILQATMLAMQRAVAALQVKAESALVDGNRCPKLDIPCEAVVKGDGKIASIAAASILAKTVRDAGMLVLHAQYPHYGFDRHMGYPTAAHFAALEAHGASPVHRRSFGPVARQLSLL.

The RNase H type-2 domain maps to 9–196 (GLVCGIDEAG…GPVARQLSLL (188 aa)). The a divalent metal cation site is built by Asp-15, Glu-16, and Asp-107.

The protein belongs to the RNase HII family. Requires Mn(2+) as cofactor. Mg(2+) serves as cofactor.

It is found in the cytoplasm. It carries out the reaction Endonucleolytic cleavage to 5'-phosphomonoester.. Functionally, endonuclease that specifically degrades the RNA of RNA-DNA hybrids. This chain is Ribonuclease HII, found in Dechloromonas aromatica (strain RCB).